The sequence spans 106 residues: Thioredoxin-like protein YusE (106 aa).

A Thioredoxin domain is found at Met-1 to Ser-101. Cysteines 26 and 29 form a disulfide.

The protein is Thioredoxin-like protein YusE (yusE) of Bacillus subtilis (strain 168).